The sequence spans 382 residues: D-galactonate dehydratase (382 aa).

Aspartate 183 is a Mg(2+) binding site. The Proton donor role is filled by histidine 185. The Mg(2+) site is built by glutamate 209 and glutamate 235. Catalysis depends on histidine 285, which acts as the Proton acceptor.

The protein belongs to the mandelate racemase/muconate lactonizing enzyme family. GalD subfamily. The cofactor is Mg(2+).

It carries out the reaction D-galactonate = 2-dehydro-3-deoxy-D-galactonate + H2O. It participates in carbohydrate acid metabolism; D-galactonate degradation; D-glyceraldehyde 3-phosphate and pyruvate from D-galactonate: step 1/3. Catalyzes the dehydration of D-galactonate to 2-keto-3-deoxy-D-galactonate. The protein is D-galactonate dehydratase of Escherichia coli O9:H4 (strain HS).